Here is a 76-residue protein sequence, read N- to C-terminus: Bowman-Birk type proteinase inhibitor DE-4 (76 aa).

7 disulfide bridges follow: Cys15-Cys69, Cys16-Cys31, Cys19-Cys65, Cys21-Cys29, Cys39-Cys46, Cys43-Cys58, and Cys48-Cys56.

Belongs to the Bowman-Birk serine protease inhibitor family.

The protein is Bowman-Birk type proteinase inhibitor DE-4 of Macrotyloma axillare (Perennial horse gram).